Reading from the N-terminus, the 395-residue chain is Ribonuclease D (395 aa).

One can recognise a 3'-5' exonuclease domain in the interval 14–181; sequence LITKSEDLAA…VYETLRDRLE (168 aa). Positions 219–300 constitute an HRDC domain; it reads NRRYLGLLRA…AEARGLPDAD (82 aa).

Belongs to the RNase D family. It depends on a divalent metal cation as a cofactor.

The protein localises to the cytoplasm. The enzyme catalyses Exonucleolytic cleavage that removes extra residues from the 3'-terminus of tRNA to produce 5'-mononucleotides.. Functionally, exonuclease involved in the 3' processing of various precursor tRNAs. Initiates hydrolysis at the 3'-terminus of an RNA molecule and releases 5'-mononucleotides. This chain is Ribonuclease D, found in Granulibacter bethesdensis (strain ATCC BAA-1260 / CGDNIH1).